The chain runs to 288 residues: Light-independent protochlorophyllide reductase iron-sulfur ATP-binding protein (288 aa).

Residues 10–15 (GIGKST) and lysine 39 contribute to the ATP site. Serine 14 contributes to the Mg(2+) binding site. 2 residues coordinate [4Fe-4S] cluster: cysteine 95 and cysteine 129. Position 180–181 (180–181 (NR)) interacts with ATP.

Belongs to the NifH/BchL/ChlL family. In terms of assembly, homodimer. Protochlorophyllide reductase is composed of three subunits; ChlL, ChlN and ChlB. [4Fe-4S] cluster serves as cofactor.

It catalyses the reaction chlorophyllide a + oxidized 2[4Fe-4S]-[ferredoxin] + 2 ADP + 2 phosphate = protochlorophyllide a + reduced 2[4Fe-4S]-[ferredoxin] + 2 ATP + 2 H2O. The protein operates within porphyrin-containing compound metabolism; chlorophyll biosynthesis (light-independent). Its function is as follows. Component of the dark-operative protochlorophyllide reductase (DPOR) that uses Mg-ATP and reduced ferredoxin to reduce ring D of protochlorophyllide (Pchlide) to form chlorophyllide a (Chlide). This reaction is light-independent. The L component serves as a unique electron donor to the NB-component of the complex, and binds Mg-ATP. This Nostoc sp. (strain PCC 7120 / SAG 25.82 / UTEX 2576) protein is Light-independent protochlorophyllide reductase iron-sulfur ATP-binding protein.